The chain runs to 307 residues: Small ribosomal subunit protein uS3 (307 aa).

Residues Met-17–Lys-86 form the KH type-2 domain. The segment covering Ile-201 to Lys-226 has biased composition (basic and acidic residues). A disordered region spans residues Ile-201–Glu-265. Residues Pro-240 to Glu-265 are compositionally biased toward acidic residues.

It belongs to the universal ribosomal protein uS3 family. As to quaternary structure, part of the 30S ribosomal subunit.

In terms of biological role, binds the lower part of the 30S subunit head. This chain is Small ribosomal subunit protein uS3, found in Methanosarcina mazei (strain ATCC BAA-159 / DSM 3647 / Goe1 / Go1 / JCM 11833 / OCM 88) (Methanosarcina frisia).